The following is a 591-amino-acid chain: Metalloendopeptidase OPG085 (591 aa).

A Zn(2+)-binding site is contributed by H41. Residue E44 is part of the active site. Zn(2+) is bound by residues H45 and E112.

It belongs to the peptidase M44 family. Requires Zn(2+) as cofactor. Post-translationally, undergoes proteolytic processing during the course of infection. May be cleaved into 46 kDa and 22 kDa products (Potential).

It localises to the virion. In terms of biological role, probably involved in maturation of some viral proteins by processing them preferentially at Ala-Gly-|-Ser/Thr/Lys motifs. Does not seem to be responsible for the cleavage of major core proteins. This Monkeypox virus protein is Metalloendopeptidase OPG085 (OPG085).